The primary structure comprises 138 residues: Ribosome-binding factor A (138 aa).

The interval 119 to 138 is disordered; the sequence is RSPEVQRDLGPSNEKDDEQN.

The protein belongs to the RbfA family. As to quaternary structure, monomer. Binds 30S ribosomal subunits, but not 50S ribosomal subunits or 70S ribosomes.

The protein localises to the cytoplasm. Its function is as follows. One of several proteins that assist in the late maturation steps of the functional core of the 30S ribosomal subunit. Associates with free 30S ribosomal subunits (but not with 30S subunits that are part of 70S ribosomes or polysomes). Required for efficient processing of 16S rRNA. May interact with the 5'-terminal helix region of 16S rRNA. The chain is Ribosome-binding factor A from Agrobacterium fabrum (strain C58 / ATCC 33970) (Agrobacterium tumefaciens (strain C58)).